We begin with the raw amino-acid sequence, 272 residues long: Oligodendrocyte transcription factor 3 (272 aa).

The span at 1–14 (MNSDSSSVSSRASS) shows a compositional bias: low complexity. Positions 1 to 71 (MNSDSSSVSS…KAAGESSKYK (71 aa)) are disordered. The span at 24-33 (DHHHRHHHHQ) shows a compositional bias: basic residues. Over residues 36 to 46 (RLNSVSSTQGD) the composition is skewed to polar residues. A coiled-coil region spans residues 68-89 (SKYKIKKQLSEQDLQQLRLKIN). A bHLH domain is found at 83–137 (QLRLKINGRERKRMHDLNLAMDGLREVMPYAHGPSVRKLSKIATLLLARNYILML).

It is found in the nucleus. In terms of biological role, may determine the distinct specification program of class A neurons in the dorsal part of the spinal cord and suppress specification of class B neurons. The chain is Oligodendrocyte transcription factor 3 (OLIG3) from Homo sapiens (Human).